We begin with the raw amino-acid sequence, 568 residues long: Multidrug and toxin extrusion protein 1 (568 aa).

Residue M1 is modified to N-acetylmethionine. Residues 1–36 (MEAPVELGPGGRQASPERRHWLRCLVLSDFREELRA) are Cytoplasmic-facing. A helical membrane pass occupies residues 37 to 57 (LLVLACPAFLAQLMVFLISFV). At 58-71 (SSVFCGHLSKLELN) the chain is on the extracellular side. The helical transmembrane segment at 72–92 (AVTLAIAVINVMGVSVGFGLS) threads the bilayer. Over 93–119 (SACDTLISQTYGSRNLKHVGVILQRGS) the chain is Cytoplasmic. The helical transmembrane segment at 120 to 140 (LILLLCCLPCWALFLNTQHIL) threads the bilayer. The Extracellular segment spans residues 141–151 (LLFRQDPAVSR). A helical transmembrane segment spans residues 152-172 (LTQTYVTIFIPALPATFLYTL). Residues 173 to 175 (QVK) are Cytoplasmic-facing. The chain crosses the membrane as a helical span at residues 176-196 (YLLNQGIVLPQVVTGVAANLV). Topologically, residues 197–214 (NALANYLFVYQLHLGVMG) are extracellular. A helical membrane pass occupies residues 215–235 (SALANTVAQFTLALLLFLYIL). The Cytoplasmic segment spans residues 236-255 (RSKVYQATWGGWSLECLQDW). The chain crosses the membrane as a helical span at residues 256-278 (ASFFRLAIPSMLMLCMEWWAYEI). The Extracellular portion of the chain corresponds to 279-294 (GSFLSGILGMVELGAQ). The chain crosses the membrane as a helical span at residues 295 to 315 (SVTYELAVIVYMIPMGLSVAV). Over 316 to 335 (NVRVGNALGAGNIEQAKKSS) the chain is Cytoplasmic. The chain crosses the membrane as a helical span at residues 336–356 (AVALLVTELIAVVFCVMLLSC). The Extracellular portion of the chain corresponds to 357–369 (KDLVGYIFTSDRD). A helical membrane pass occupies residues 370-390 (IIALVAQVTPIYAVSHLFESL). The Cytoplasmic segment spans residues 391-407 (AGTSGGILRGSGNQKFG). The helical transmembrane segment at 408–430 (AIVNAIGYYVVGLPIGIALMFAA) threads the bilayer. At 431-433 (KLG) the chain is on the extracellular side. The chain crosses the membrane as a helical span at residues 434–456 (VIGLWLGIVVCAVSQAVCFLGFI). Topologically, residues 457–544 (ARLNWTKACQ…LSGKQLALRR (88 aa)) are cytoplasmic. Residues 545–565 (GLLLLGVILVLLAGILVKVYV) form a helical membrane-spanning segment. Topologically, residues 566–568 (RTQ) are extracellular.

The protein belongs to the multi antimicrobial extrusion (MATE) (TC 2.A.66.1) family. In terms of tissue distribution, predominantly expressed in kidney and liver.

It localises to the cell membrane. The protein localises to the apical cell membrane. It catalyses the reaction thiamine(out) + H(+)(in) = thiamine(in) + H(+)(out). The enzyme catalyses estrone 3-sulfate(in) + H(+)(out) = estrone 3-sulfate(out) + H(+)(in). The catalysed reaction is creatinine(in) + H(+)(out) = creatinine(out) + H(+)(in). It carries out the reaction agmatine(in) + H(+)(out) = agmatine(out) + H(+)(in). In terms of biological role, multidrug efflux pump that functions as a H(+)/organic cation antiporter. Plays a physiological role in the excretion of cationic compounds including endogenous metabolites, drugs, toxins through the kidney and liver, into urine and bile respectively. Mediates the efflux of endogenous compounds such as creatinine, vitamin B1/thiamine, agmatine and estrone-3-sulfate. May also contribute to regulate the transport of cationic compounds in testis across the blood-testis-barrier. This is Multidrug and toxin extrusion protein 1 (SLC47A1) from Oryctolagus cuniculus (Rabbit).